An 82-amino-acid polypeptide reads, in one-letter code: Small ribosomal subunit protein bS16 (82 aa).

This sequence belongs to the bacterial ribosomal protein bS16 family.

The protein is Small ribosomal subunit protein bS16 of Erwinia tasmaniensis (strain DSM 17950 / CFBP 7177 / CIP 109463 / NCPPB 4357 / Et1/99).